Reading from the N-terminus, the 1494-residue chain is Serine/threonine-protein kinase VPS15 (1494 aa).

Residue Gly-2 is the site of N-myristoyl glycine attachment. Positions 27–307 (LVLKEVLGRG…VFPNYFSPFL (281 aa)) constitute a Protein kinase domain. Residues 33–41 (LGRGRFLKS) and Lys-54 contribute to the ATP site. The active-site Proton acceptor is the Asp-149. HEAT repeat units lie at residues 383–421 (NSKDEIFYSISDALKKNRHPFLKKITMDDLGTLMSLYDS), 480–517 (DRLQRVLPYVVALLSDPTAIVRCAAMETLCDILPLVRD), 524–562 (KIFPEYIFPMLSMLPEDTEESVRICYASNIAKLALTAYG), 610–646 (KTIAEVVQELVMGPKQTPNVRRALLQDIGELCFFFGQ), 648–685 (QSNDFLLPILPAFLNDRDEQLRSVFFEKIVYVCFFVGQ), 687–724 (SVEEYLLPYIDQALSDQTEAVIVNALECLSTLCKSSFL), and 727–764 (RALLQMIECVYPLLCYPSQWVRRAVVTFIAASSECLGA). Disordered regions lie at residues 859 to 903 (QSVE…TVEL) and 1037 to 1064 (SASVTSEDASSPADLVGEPSLSRTSVPD). Low complexity predominate over residues 1037–1047 (SASVTSEDASS). 7 WD repeats span residues 1079-1118 (EHRSAVNDIATSSDHSFFVSASDDSTVKVWDSRKLEKDIS), 1127-1166 (LEGSRGMCTTMLRNSTQVVVGASDGVIHMFSIDHISRGLG), 1184-1226 (KEGA…DAWT), 1231-1270 (PEEGYVSSLVTSPCGNWFVSGSSRGVLTLWDLRFRVPVNS), 1276-1323 (ICPI…CHQV), 1371-1409 (PRLPGIRSLLPLPGGDLLTGGTDLKIRRWDYSSPERSYC), and 1466-1494 (DSVQSLASVKLNQRLLISSSRDGAIKVWK).

Belongs to the protein kinase superfamily. Ser/Thr protein kinase family. In terms of assembly, interacts with VPS34. Component of a complex made of VPS38/USL1 and PI3K main subunits such as VPS15, ATG6/VPS30 and VPS34. Post-translationally, autophosphorylated. In terms of tissue distribution, mainly expressed in anthers, pollen grains and pollen tubes, and, to a lower extent, in other tissues and organs including seedlings, roots, stems, leaves, flowers, pitils and siliques.

The protein resides in the cytoplasm. It localises to the golgi apparatus. It is found in the trans-Golgi network membrane. The protein localises to the endosome membrane. It catalyses the reaction L-seryl-[protein] + ATP = O-phospho-L-seryl-[protein] + ADP + H(+). The enzyme catalyses L-threonyl-[protein] + ATP = O-phospho-L-threonyl-[protein] + ADP + H(+). Serine/threonine-protein kinase required for cytoplasm to vacuole transport (Cvt) and autophagy as a part of the autophagy-specific VPS34 PI3-kinase complex I. Required for pollen development and germination, probably via the modulation of phosphatidylinositol 3-phosphate (PI3P) formation and vacuolar organization. The protein is Serine/threonine-protein kinase VPS15 of Arabidopsis thaliana (Mouse-ear cress).